A 101-amino-acid polypeptide reads, in one-letter code: MSDLNNPRDIIIAPVVSEKSYGLMEQGTYTFLVRPDSNKTQIKIAVEKIFGVKVSSVNTLNREGKTKRTRFGYGRRKSTKRAMVTLAAGSDPIDIFGGSAS.

Belongs to the universal ribosomal protein uL23 family. Part of the 50S ribosomal subunit. Contacts protein L29, and trigger factor when it is bound to the ribosome.

Its function is as follows. One of the early assembly proteins it binds 23S rRNA. One of the proteins that surrounds the polypeptide exit tunnel on the outside of the ribosome. Forms the main docking site for trigger factor binding to the ribosome. This chain is Large ribosomal subunit protein uL23, found in Corynebacterium kroppenstedtii (strain DSM 44385 / JCM 11950 / CIP 105744 / CCUG 35717).